We begin with the raw amino-acid sequence, 160 residues long: 2-C-methyl-D-erythritol 2,4-cyclodiphosphate synthase (160 aa).

Positions 10 and 12 each coordinate a divalent metal cation. 4-CDP-2-C-methyl-D-erythritol 2-phosphate-binding positions include 10 to 12 (DVH) and 36 to 37 (HS). H44 is an a divalent metal cation binding site. 4-CDP-2-C-methyl-D-erythritol 2-phosphate is bound by residues 58–60 (DIG), 63–67 (FPDTD), 102–108 (AQAPKMA), 134–137 (TTTE), F141, and R144.

Belongs to the IspF family. Homotrimer. A divalent metal cation is required as a cofactor.

It catalyses the reaction 4-CDP-2-C-methyl-D-erythritol 2-phosphate = 2-C-methyl-D-erythritol 2,4-cyclic diphosphate + CMP. Its pathway is isoprenoid biosynthesis; isopentenyl diphosphate biosynthesis via DXP pathway; isopentenyl diphosphate from 1-deoxy-D-xylulose 5-phosphate: step 4/6. In terms of biological role, involved in the biosynthesis of isopentenyl diphosphate (IPP) and dimethylallyl diphosphate (DMAPP), two major building blocks of isoprenoid compounds. Catalyzes the conversion of 4-diphosphocytidyl-2-C-methyl-D-erythritol 2-phosphate (CDP-ME2P) to 2-C-methyl-D-erythritol 2,4-cyclodiphosphate (ME-CPP) with a corresponding release of cytidine 5-monophosphate (CMP). This Shewanella denitrificans (strain OS217 / ATCC BAA-1090 / DSM 15013) protein is 2-C-methyl-D-erythritol 2,4-cyclodiphosphate synthase.